Here is a 171-residue protein sequence, read N- to C-terminus: Large ribosomal subunit protein uL10 (171 aa).

Belongs to the universal ribosomal protein uL10 family. As to quaternary structure, part of the ribosomal stalk of the 50S ribosomal subunit. The N-terminus interacts with L11 and the large rRNA to form the base of the stalk. The C-terminus forms an elongated spine to which L12 dimers bind in a sequential fashion forming a multimeric L10(L12)X complex.

Functionally, forms part of the ribosomal stalk, playing a central role in the interaction of the ribosome with GTP-bound translation factors. In Rhizorhabdus wittichii (strain DSM 6014 / CCUG 31198 / JCM 15750 / NBRC 105917 / EY 4224 / RW1) (Sphingomonas wittichii), this protein is Large ribosomal subunit protein uL10.